The primary structure comprises 447 residues: Ribosomal protein uS12 methylthiotransferase RimO (447 aa).

The MTTase N-terminal domain maps to 4–114; that stretch reads PKVGFVSLGC…VMEAVHEYVP (111 aa). [4Fe-4S] cluster-binding residues include Cys-13, Cys-49, Cys-78, Cys-147, Cys-151, and Cys-154. The 238-residue stretch at 133 to 370 folds into the Radical SAM core domain; the sequence is LTPKHYAYLK…MQVQQQISAA (238 aa). Residues 373–443 enclose the TRAM domain; it reads QKRIGQTMTV…EYDLFAKLIK (71 aa).

This sequence belongs to the methylthiotransferase family. RimO subfamily. The cofactor is [4Fe-4S] cluster.

It is found in the cytoplasm. The catalysed reaction is L-aspartate(89)-[ribosomal protein uS12]-hydrogen + (sulfur carrier)-SH + AH2 + 2 S-adenosyl-L-methionine = 3-methylsulfanyl-L-aspartate(89)-[ribosomal protein uS12]-hydrogen + (sulfur carrier)-H + 5'-deoxyadenosine + L-methionine + A + S-adenosyl-L-homocysteine + 2 H(+). Catalyzes the methylthiolation of an aspartic acid residue of ribosomal protein uS12. The polypeptide is Ribosomal protein uS12 methylthiotransferase RimO (Acinetobacter baumannii (strain AB0057)).